The chain runs to 408 residues: Arginine biosynthesis bifunctional protein ArgJ (408 aa).

Substrate-binding residues include T158, K184, T195, E281, N403, and T408. Catalysis depends on T195, which acts as the Nucleophile.

This sequence belongs to the ArgJ family. As to quaternary structure, heterotetramer of two alpha and two beta chains.

The protein localises to the cytoplasm. The enzyme catalyses N(2)-acetyl-L-ornithine + L-glutamate = N-acetyl-L-glutamate + L-ornithine. It catalyses the reaction L-glutamate + acetyl-CoA = N-acetyl-L-glutamate + CoA + H(+). It functions in the pathway amino-acid biosynthesis; L-arginine biosynthesis; L-ornithine and N-acetyl-L-glutamate from L-glutamate and N(2)-acetyl-L-ornithine (cyclic): step 1/1. The protein operates within amino-acid biosynthesis; L-arginine biosynthesis; N(2)-acetyl-L-ornithine from L-glutamate: step 1/4. In terms of biological role, catalyzes two activities which are involved in the cyclic version of arginine biosynthesis: the synthesis of N-acetylglutamate from glutamate and acetyl-CoA as the acetyl donor, and of ornithine by transacetylation between N(2)-acetylornithine and glutamate. In Bacillus cereus (strain ZK / E33L), this protein is Arginine biosynthesis bifunctional protein ArgJ.